Here is a 273-residue protein sequence, read N- to C-terminus: Shikimate dehydrogenase (NADP(+)) (273 aa).

Residues 15–17 (SKS) and T62 contribute to the shikimate site. K66 serves as the catalytic Proton acceptor. D78 contributes to the NADP(+) binding site. Shikimate contacts are provided by N87 and D103. Residues 127–131 (GAGGA), 150–155 (NRTYAR), and M214 contribute to the NADP(+) site. Residue Y216 coordinates shikimate. An NADP(+)-binding site is contributed by G238.

Belongs to the shikimate dehydrogenase family. In terms of assembly, homodimer.

The catalysed reaction is shikimate + NADP(+) = 3-dehydroshikimate + NADPH + H(+). It participates in metabolic intermediate biosynthesis; chorismate biosynthesis; chorismate from D-erythrose 4-phosphate and phosphoenolpyruvate: step 4/7. Functionally, involved in the biosynthesis of the chorismate, which leads to the biosynthesis of aromatic amino acids. Catalyzes the reversible NADPH linked reduction of 3-dehydroshikimate (DHSA) to yield shikimate (SA). This Yersinia enterocolitica serotype O:8 / biotype 1B (strain NCTC 13174 / 8081) protein is Shikimate dehydrogenase (NADP(+)).